A 238-amino-acid polypeptide reads, in one-letter code: uncharacterized protein (238 aa).

Residues 10-33 traverse the membrane as a helical segment; sequence TLLALMISLSLSSLLLLSISHFYV.

The protein localises to the membrane. This is an uncharacterized protein from Haemophilus influenzae (strain ATCC 51907 / DSM 11121 / KW20 / Rd).